The chain runs to 424 residues: Gamma-glutamyl phosphate reductase (424 aa).

This sequence belongs to the gamma-glutamyl phosphate reductase family.

Its subcellular location is the cytoplasm. The catalysed reaction is L-glutamate 5-semialdehyde + phosphate + NADP(+) = L-glutamyl 5-phosphate + NADPH + H(+). Its pathway is amino-acid biosynthesis; L-proline biosynthesis; L-glutamate 5-semialdehyde from L-glutamate: step 2/2. In terms of biological role, catalyzes the NADPH-dependent reduction of L-glutamate 5-phosphate into L-glutamate 5-semialdehyde and phosphate. The product spontaneously undergoes cyclization to form 1-pyrroline-5-carboxylate. In Dehalococcoides mccartyi (strain ATCC BAA-2266 / KCTC 15142 / 195) (Dehalococcoides ethenogenes (strain 195)), this protein is Gamma-glutamyl phosphate reductase.